The chain runs to 800 residues: Ent-copalyl diphosphate synthase 2 (800 aa).

The disordered stretch occupies residues 52–80; sequence QGQETRERRQLDDDEHARPPQGGDDDVAA. Residues 55 to 69 show a composition bias toward basic and acidic residues; sequence ETRERRQLDDDEHAR. K242 is a substrate binding site. Positions 374 and 376 each coordinate Mg(2+). Positions 374 to 377 match the DXDD motif motif; sequence DIDD. K461 contributes to the substrate binding site.

The protein belongs to the terpene synthase family. The cofactor is Mg(2+).

The enzyme catalyses (2E,6E,10E)-geranylgeranyl diphosphate = ent-copalyl diphosphate. In terms of biological role, catalyzes the conversion of geranylgeranyl diphosphate to the phytoalexin precursor ent-copalyl diphosphate. The protein is Ent-copalyl diphosphate synthase 2 (CPS2) of Oryza sativa subsp. indica (Rice).